The chain runs to 350 residues: Guanine nucleotide-binding protein G(t) subunit alpha-1 (350 aa).

Residues 1 to 21 (MGAGASAEEKHSRELEKKLKE) form a disordered region. Glycine 2 carries N-myristoyl glycine lipidation. A compositionally biased stretch (basic and acidic residues) spans 7 to 21 (AEEKHSRELEKKLKE). Residues 28–350 (RTVKLLLLGA…KENLKDCGLF (323 aa)) form the G-alpha domain. Residues 31–44 (KLLLLGAGESGKST) form a G1 motif region. Residue 36–43 (GAGESGKS) participates in GTP binding. Serine 43 is a Mg(2+) binding site. At tyrosine 142 the chain carries Phosphotyrosine; by SRC. GTP is bound by residues aspartate 146, 171 to 177 (LRSRVKT), glycine 199, 265 to 268 (NKKD), and alanine 322. Residues 169 to 177 (DVLRSRVKT) are G2 motif. ADP-ribosylarginine; by cholera toxin is present on arginine 174. Residue threonine 177 participates in Mg(2+) binding. Residues 192–201 (FRMFDVGGQR) are G3 motif. The tract at residues 261–268 (VLFLNKKD) is G4 motif. The segment at 320–325 (TCATDT) is G5 motif. Positions 340-350 (IKENLKDCGLF) are interaction with RHO. Cysteine 347 is modified (ADP-ribosylcysteine; by pertussis toxin).

It belongs to the G-alpha family. G(i/o/t/z) subfamily. As to quaternary structure, heterotrimeric G proteins are composed of 3 subunits alpha, beta and gamma. The alpha chain contains the guanine nucleotide binding site. Interacts with RHO. Interacts with RGS9 and PDE6G. Interacts (when myristoylated) with UNC119; interaction is required for localization in sensory neurons. Rod photoreceptor cells. Predominantly expressed in the retina followed by the ciliary body, iris and retinal pigment epithelium.

Its subcellular location is the cell projection. It is found in the cilium. It localises to the photoreceptor outer segment. The protein resides in the membrane. The protein localises to the photoreceptor inner segment. In terms of biological role, functions as a signal transducer for the rod photoreceptor RHO. Required for normal RHO-mediated light perception by the retina. Guanine nucleotide-binding proteins (G proteins) function as transducers downstream of G protein-coupled receptors (GPCRs), such as the photoreceptor RHO. The alpha chain contains the guanine nucleotide binding site and alternates between an active, GTP-bound state and an inactive, GDP-bound state. Activated RHO promotes GDP release and GTP binding. Signaling is mediated via downstream effector proteins, such as cGMP-phosphodiesterase. This Homo sapiens (Human) protein is Guanine nucleotide-binding protein G(t) subunit alpha-1 (GNAT1).